The following is a 380-amino-acid chain: Cytochrome b (380 aa).

4 helical membrane passes run Phe34–Met54, Trp78–Ile99, Trp114–Leu134, and Phe179–Thr199. Residues His84 and His98 each contribute to the heme b site. Positions 183 and 197 each coordinate heme b. His202 provides a ligand contact to a ubiquinone. 4 helical membrane passes run Leu227–Ser247, Leu289–His309, Ile321–Ser341, and Phe348–Pro368.

It belongs to the cytochrome b family. As to quaternary structure, the cytochrome bc1 complex contains 11 subunits: 3 respiratory subunits (MT-CYB, CYC1 and UQCRFS1), 2 core proteins (UQCRC1 and UQCRC2) and 6 low-molecular weight proteins (UQCRH/QCR6, UQCRB/QCR7, UQCRQ/QCR8, UQCR10/QCR9, UQCR11/QCR10 and a cleavage product of UQCRFS1). This cytochrome bc1 complex then forms a dimer. Heme b serves as cofactor.

The protein localises to the mitochondrion inner membrane. Its function is as follows. Component of the ubiquinol-cytochrome c reductase complex (complex III or cytochrome b-c1 complex) that is part of the mitochondrial respiratory chain. The b-c1 complex mediates electron transfer from ubiquinol to cytochrome c. Contributes to the generation of a proton gradient across the mitochondrial membrane that is then used for ATP synthesis. This chain is Cytochrome b (MT-CYB), found in Pelecanoides urinatrix (Common diving petrel).